The sequence spans 95 residues: Co-chaperonin GroES (95 aa).

It belongs to the GroES chaperonin family. In terms of assembly, heptamer of 7 subunits arranged in a ring. Interacts with the chaperonin GroEL.

Its subcellular location is the cytoplasm. In terms of biological role, together with the chaperonin GroEL, plays an essential role in assisting protein folding. The GroEL-GroES system forms a nano-cage that allows encapsulation of the non-native substrate proteins and provides a physical environment optimized to promote and accelerate protein folding. GroES binds to the apical surface of the GroEL ring, thereby capping the opening of the GroEL channel. This is Co-chaperonin GroES from Lachnoclostridium phytofermentans (strain ATCC 700394 / DSM 18823 / ISDg) (Clostridium phytofermentans).